The sequence spans 419 residues: UDP-N-acetylglucosamine 1-carboxyvinyltransferase (419 aa).

A phosphoenolpyruvate-binding site is contributed by 22-23 (KN). Arginine 93 is a UDP-N-acetyl-alpha-D-glucosamine binding site. The active-site Proton donor is the cysteine 117. Cysteine 117 carries the 2-(S-cysteinyl)pyruvic acid O-phosphothioketal modification. 2 residues coordinate UDP-N-acetyl-alpha-D-glucosamine: aspartate 307 and isoleucine 329.

It belongs to the EPSP synthase family. MurA subfamily.

The protein resides in the cytoplasm. It catalyses the reaction phosphoenolpyruvate + UDP-N-acetyl-alpha-D-glucosamine = UDP-N-acetyl-3-O-(1-carboxyvinyl)-alpha-D-glucosamine + phosphate. It functions in the pathway cell wall biogenesis; peptidoglycan biosynthesis. Functionally, cell wall formation. Adds enolpyruvyl to UDP-N-acetylglucosamine. This chain is UDP-N-acetylglucosamine 1-carboxyvinyltransferase, found in Shewanella frigidimarina (strain NCIMB 400).